Here is a 407-residue protein sequence, read N- to C-terminus: MEIYIVGGAVRDRLLGLPVKDRDWVVVGSTPDEMLAQGYRPVGKDFPVFLHPETQEEYALARTERKIAKGYHGFTFHTSPEVTLEEDLARRDLTINAIAEAADGSLTDPYGGQEDLKAGVLRHVSEAFAEDPVRILRLARFAARFDFAVAPETMALMRRMVDDGEADALVAERVWQELAKGLMEDKPSRMFLTLRECGALARILPEVDALFGVPQRADHHPEIDCGDHVMRVLDYAAAAGQPLAVRFAALGHDLGKALTPAKVLPRHIGHEEGGIAPLAELCRRLRVPNDCRDLAHITMVHHTKVHRALELRPDTVLRLLKDCDALRRPERFLQMLDACLADTRGRLGFERAPYPQKDYLQAQLAATLQIDAGAIAAGCADKAAIPATIDAARTAVIAKCKEEWKED.

ATP contacts are provided by G8 and R11. 2 residues coordinate CTP: G8 and R11. The Mg(2+) site is built by D21 and D23. Residues R91, R137, and R140 each contribute to the ATP site. Positions 91, 137, and 140 each coordinate CTP. The HD domain maps to 225-326; sequence CGDHVMRVLD…LRLLKDCDAL (102 aa).

This sequence belongs to the tRNA nucleotidyltransferase/poly(A) polymerase family. Bacterial CCA-adding enzyme type 1 subfamily. Monomer. Can also form homodimers and oligomers. It depends on Mg(2+) as a cofactor. Ni(2+) is required as a cofactor.

The enzyme catalyses a tRNA precursor + 2 CTP + ATP = a tRNA with a 3' CCA end + 3 diphosphate. It carries out the reaction a tRNA with a 3' CCA end + 2 CTP + ATP = a tRNA with a 3' CCACCA end + 3 diphosphate. Functionally, catalyzes the addition and repair of the essential 3'-terminal CCA sequence in tRNAs without using a nucleic acid template. Adds these three nucleotides in the order of C, C, and A to the tRNA nucleotide-73, using CTP and ATP as substrates and producing inorganic pyrophosphate. tRNA 3'-terminal CCA addition is required both for tRNA processing and repair. Also involved in tRNA surveillance by mediating tandem CCA addition to generate a CCACCA at the 3' terminus of unstable tRNAs. While stable tRNAs receive only 3'-terminal CCA, unstable tRNAs are marked with CCACCA and rapidly degraded. The polypeptide is Multifunctional CCA protein (Chromobacterium violaceum (strain ATCC 12472 / DSM 30191 / JCM 1249 / CCUG 213 / NBRC 12614 / NCIMB 9131 / NCTC 9757 / MK)).